A 783-amino-acid polypeptide reads, in one-letter code: Transcription factor E4F1 (783 aa).

The tract at residues 40–84 (GFLGLPAPFSEEDEDDVHRCGRCQVEFTALEDFVQHKIQKTCHRA) is required for ubiquitin ligase activity. Residue Ser-49 is modified to Phosphoserine. Residues 185–264 (LLVNKEGRYV…GKSFRESGAL (80 aa)) form a mediates dimerization, DNA-binding, transcription repression of CCNA2 and interaction with HMGA2 region. C2H2-type zinc fingers lie at residues 193–215 (YVCMLCHKTFKTGSILKAHMVTH) and 221–243 (HECKLCGASFRTKGSLIRHHRRH). The segment at 249 to 273 (YKCAKCGKSFRESGALTRHLKSLTP) adopts a C2H2-type 3; degenerate zinc-finger fold. The interval 368–565 (NLLHQAMQNS…REKGSLVRHV (198 aa)) is mediates interaction with CDKN2A. The disordered stretch occupies residues 386-407 (GEESALEPAPPSGSSPQCLGDG). 5 consecutive C2H2-type zinc fingers follow at residues 434-456 (HPCPQCSETFPTAATLEAHKRGH), 462-484 (FTCTQCGKAFPKAYLLKKHQEVH), 490-512 (FRCGDCGKLYKTIAHVRGHRRVH), 518-540 (FPCPQCGKRYKTKNAQQVHFRTH), and 546-568 (HVCQFCSRGFREKGSLVRHVRHH). The interval 434-598 (HPCPQCSETF…LNRHLRTKGG (165 aa)) is interaction with BMI1. Residues 520–579 (CPQCGKRYKTKNAQQVHFRTHLEEKPHVCQFCSRGFREKGSLVRHVRHHTGEKPFKCYKC) form a mediates interaction with TP53 region. The C2H2-type 9; degenerate zinc finger occupies 574–596 (FKCYKCGRGFAEHGTLNRHLRTK). The segment at 574–596 (FKCYKCGRGFAEHGTLNRHLRTK) is mediates interaction with RASSF1.

In terms of assembly, homodimer; binds DNA as a dimer. Forms a complex with CDKN2A and TP53. Interacts with HDAC1, HMGA2 and RASSF1. Interactions with TP53, RB1, ANP32A and probably BMI1 and FHL2 regulate E4F1 activity. Phosphorylated; phosphorylation is cell cycle-dependent and regulates DNA-binding activity and function. Post-translationally, may be sumoylated by UBE2I upon interaction with CDKN2A. Ubiquitously expressed.

It is found in the nucleus. Its subcellular location is the nucleoplasm. The protein localises to the cytoplasm. The catalysed reaction is S-ubiquitinyl-[E2 ubiquitin-conjugating enzyme]-L-cysteine + [acceptor protein]-L-lysine = [E2 ubiquitin-conjugating enzyme]-L-cysteine + N(6)-ubiquitinyl-[acceptor protein]-L-lysine.. Its pathway is protein modification; protein ubiquitination. Its function is as follows. May function as a transcriptional repressor. May also function as a ubiquitin ligase mediating ubiquitination of chromatin-associated TP53. Functions in cell survival and proliferation through control of the cell cycle. Functions in the p53 and pRB tumor suppressor pathways and regulates the cyclin CCNA2 transcription. The sequence is that of Transcription factor E4F1 (E4f1) from Mus musculus (Mouse).